Here is a 326-residue protein sequence, read N- to C-terminus: Transcription factor MYB16 (326 aa).

2 consecutive HTH myb-type domains span residues 9–61 (KLGL…TNYL) and 62–116 (RPDI…KKRL). 2 DNA-binding regions (H-T-H motif) span residues 37 to 61 (WRSLPEKAGLHRCGKSCRLRWTNYL) and 89 to 112 (WSAIATHLPKRTDNEIKNYWNTHL). Disordered regions lie at residues 197–217 (NWTTKPHEDQQQLESPTSTVS) and 280–299 (DRSFSGDKNETAGESSGGDC). The segment covering 208–217 (QLESPTSTVS) has biased composition (polar residues). A compositionally biased stretch (basic and acidic residues) spans 280 to 290 (DRSFSGDKNET).

In terms of tissue distribution, expressed in trichomes, epidermis and mesophyll cells of young leaves, stems, petals, sepals, carpels and stamens.

The protein localises to the nucleus. Its function is as follows. Involved in the control of epidermal cell morphogenesis in petals. Promotes unidirectional cell expansion once outgrowth has been initiated. Coordinately with WIN1/SHN1, participates in the regulation of cuticle biosynthesis and wax accumulation in reproductive organs and trichomes. Functions in cuticle nanoridge formation in petals and stamens, and in morphogenesis of petal conical cells and trichomes. Functions as a major regulator of cuticle formation in vegetative organs by regulating the cuticle biosynthesis genes CYP86A8/LCR and CER1. The protein is Transcription factor MYB16 of Arabidopsis thaliana (Mouse-ear cress).